A 696-amino-acid chain; its full sequence is Lutropin-choriogonadotropic hormone receptor (696 aa).

Residues 1 to 27 (MRRRSLALRLLLALLLLPPPLPQTLLG) form the signal peptide. Over 28-358 (APCPEPCSCR…AFNPCEDIMG (331 aa)) the chain is Extracellular. Asn-99 carries N-linked (GlcNAc...) asparagine glycosylation. LRR repeat units lie at residues 122-147 (LPRLKYLSICNTGIRKLPDVTKIFSS), 149-171 (FNFILEICDNLHITTVPANAFQG), 172-196 (MNNESITLKLYGNGFEEIQSHAFNG), 198-220 (TLISLELKENAHLKKMHNDAFRG), 221-244 (ARGPSILDISSTKLQALPSYGLES), and 250-271 (ATSSYSLKKLPSREKFTNLLDA). Residues Asn-174 and Asn-195 are each glycosylated (N-linked (GlcNAc...) asparagine). Residues Asn-291, Asn-299, and Asn-313 are each glycosylated (N-linked (GlcNAc...) asparagine). Tyr-331 carries the sulfotyrosine modification. A helical membrane pass occupies residues 359-386 (YDFLRVLIWLINILAIMGNVTVLFVLLT). The Cytoplasmic portion of the chain corresponds to 387–395 (SHYKLTVPR). The helical transmembrane segment at 396-418 (FLMCNLSFADFCMGLYLLLIASV) threads the bilayer. Residues 419 to 439 (DAQTKGQYYNHAIDWQTGNGC) lie on the Extracellular side of the membrane. Cysteines 439 and 514 form a disulfide. A helical transmembrane segment spans residues 440–462 (SVAGFFTVFASELSVYTLTVITL). At 463–482 (ERWHTITYAIQLDQKLRLRH) the chain is on the cytoplasmic side. Residues 483–505 (AIPIMLGGWLFSTLIAMLPLVGV) traverse the membrane as a helical segment. Residues 506–525 (SSYMKVSICLPMDVETTLSQ) are Extracellular-facing. Residues 526-547 (VYILTILILNVVAFIIICACYI) traverse the membrane as a helical segment. The Cytoplasmic segment spans residues 548–570 (KIYFAVQNPELMATNKDTKIAKK). Residues 571–594 (MAVLIFTDFTCMAPISFFAISAAL) traverse the membrane as a helical segment. At 595–605 (KVPLITVTNSK) the chain is on the extracellular side. The helical transmembrane segment at 606–626 (VLLVLFYPVNSCANPFLYAIF) threads the bilayer. The Cytoplasmic segment spans residues 627–696 (TKAFRRDFFL…VMDKTCYKDC (70 aa)). Residues Cys-643 and Cys-644 are each lipidated (S-palmitoyl cysteine).

Belongs to the G-protein coupled receptor 1 family. FSH/LSH/TSH subfamily. In terms of processing, sulfated.

Its subcellular location is the cell membrane. Functionally, receptor for lutropin-choriogonadotropic hormone. The activity of this receptor is mediated by G proteins which activate adenylate cyclase. The sequence is that of Lutropin-choriogonadotropic hormone receptor (LHCGR) from Sus scrofa (Pig).